A 320-amino-acid chain; its full sequence is Zona pellucida-binding protein 1 (320 aa).

Asn85 and Asn158 each carry an N-linked (GlcNAc...) asparagine glycan.

This sequence belongs to the zona pellucida-binding protein Sp38 family.

It is found in the cytoplasmic vesicle. The protein resides in the secretory vesicle. Its subcellular location is the acrosome. It localises to the secreted. The protein localises to the acrosome membrane. In terms of biological role, plays a role in sperm morphogenesis and in sperm-oocyte interaction during fertilization. In Gallus gallus (Chicken), this protein is Zona pellucida-binding protein 1 (ZPBP1).